Here is a 207-residue protein sequence, read N- to C-terminus: Superoxide dismutase [Mn] (207 aa).

Mn(2+) contacts are provided by His-28, His-76, Asp-160, and His-164.

It belongs to the iron/manganese superoxide dismutase family. It depends on Mn(2+) as a cofactor.

It carries out the reaction 2 superoxide + 2 H(+) = H2O2 + O2. Destroys superoxide anion radicals which are normally produced within the cells and which are toxic to biological systems. The chain is Superoxide dismutase [Mn] (sodA) from Mycobacterium leprae (strain TN).